Consider the following 492-residue polypeptide: Glutamyl-tRNA(Gln) amidotransferase subunit A (492 aa).

Active-site charge relay system residues include Lys-81 and Ser-156. Ser-180 functions as the Acyl-ester intermediate in the catalytic mechanism.

It belongs to the amidase family. GatA subfamily. In terms of assembly, heterotrimer of A, B and C subunits.

It catalyses the reaction L-glutamyl-tRNA(Gln) + L-glutamine + ATP + H2O = L-glutaminyl-tRNA(Gln) + L-glutamate + ADP + phosphate + H(+). Its function is as follows. Allows the formation of correctly charged Gln-tRNA(Gln) through the transamidation of misacylated Glu-tRNA(Gln) in organisms which lack glutaminyl-tRNA synthetase. The reaction takes place in the presence of glutamine and ATP through an activated gamma-phospho-Glu-tRNA(Gln). The sequence is that of Glutamyl-tRNA(Gln) amidotransferase subunit A from Rhodococcus erythropolis (strain PR4 / NBRC 100887).